The sequence spans 191 residues: Glycerol-3-phosphate acyltransferase (191 aa).

Transmembrane regions (helical) follow at residues 5 to 25, 51 to 71, 78 to 98, 114 to 134, and 153 to 173; these read IILI…IAKI, LAVL…YTAQ, DLYI…PIWL, IALN…VFFI, and SFFF…LIFL.

Belongs to the PlsY family. In terms of assembly, probably interacts with PlsX.

Its subcellular location is the cell membrane. The catalysed reaction is an acyl phosphate + sn-glycerol 3-phosphate = a 1-acyl-sn-glycero-3-phosphate + phosphate. The protein operates within lipid metabolism; phospholipid metabolism. Catalyzes the transfer of an acyl group from acyl-phosphate (acyl-PO(4)) to glycerol-3-phosphate (G3P) to form lysophosphatidic acid (LPA). This enzyme utilizes acyl-phosphate as fatty acyl donor, but not acyl-CoA or acyl-ACP. In Wolbachia pipientis subsp. Culex pipiens (strain wPip), this protein is Glycerol-3-phosphate acyltransferase.